The sequence spans 200 residues: MKFLELNKKRHAIKTFNDQPVDYEDLRTAIEIATLAPSANNIQPWKFVVVQEKKAELAKGLPLANKVQVEQAQYVVALFSDTDLALRSRKIARIGVKSLPDDLIGYYMETLPPRFAAFNEVQTGEYLAINAGIVAMNLVLSLTDQKIASNIILGFDKSTTNGILDIDPRFRPELLITVGYSDEKPEPSYRLPVDEVIERR.

FMN serves as cofactor.

This chain is Putative NAD(P)H nitroreductase Spy0809, found in Streptococcus pyogenes serotype M6 (strain ATCC BAA-946 / MGAS10394).